We begin with the raw amino-acid sequence, 40 residues long: uncharacterized protein (40 aa).

The first 27 residues, methionine 1 to phenylalanine 27, serve as a signal peptide directing secretion.

This is an uncharacterized protein from Archaeoglobus fulgidus (strain ATCC 49558 / DSM 4304 / JCM 9628 / NBRC 100126 / VC-16).